The following is a 176-amino-acid chain: Mitochondrial inner membrane protein Mpv17 (176 aa).

4 helical membrane passes run 18–38 (VQVL…QQLV), 57–77 (LGCG…DHLI), 94–114 (GGFA…LNGM), and 131–151 (LITN…LVPL).

The protein belongs to the peroxisomal membrane protein PXMP2/4 family.

It localises to the mitochondrion inner membrane. Functionally, non-selective channel that modulates the membrane potential under normal conditions and oxidative stress, and is involved in mitochondrial homeostasis. Involved in mitochondrial deoxynucleoside triphosphates (dNTP) pool homeostasis and mitochondrial DNA (mtDNA) maintenance. May be involved in the regulation of reactive oxygen species metabolism and the control of oxidative phosphorylation. In Rattus norvegicus (Rat), this protein is Mitochondrial inner membrane protein Mpv17.